Here is a 452-residue protein sequence, read N- to C-terminus: Dimethyladenosine transferase 2, mitochondrial (452 aa).

S-adenosyl-L-methionine-binding residues include Ile46, Glu99, and Asp125. The disordered stretch occupies residues 408-452 (ANDEPNLEDGVTLPEEDDAEADEIIEEESPVPATTPVKRRRKASS). Residues 421–436 (PEEDDAEADEIIEEES) show a composition bias toward acidic residues.

It belongs to the class I-like SAM-binding methyltransferase superfamily. rRNA adenine N(6)-methyltransferase family. KsgA subfamily.

Its subcellular location is the mitochondrion. Its function is as follows. Probable S-adenosyl-L-methionine-dependent methyltransferase which specifically dimethylates mitochondrial 12S rRNA at the conserved stem loop. Also required for basal transcription of mitochondrial DNA. Also regulates mitochondrial DNA copy number. Stimulates transcription independently of the methyltransferase activity. The sequence is that of Dimethyladenosine transferase 2, mitochondrial (mtTFB2) from Drosophila melanogaster (Fruit fly).